The sequence spans 214 residues: Nucleoplasmin-2 (214 aa).

The tract at residues 119–214 (ERYEASDLTW…ARAKKPGFKK (96 aa)) is disordered. The span at 127–155 (TWEEEEEEEGEEEEEEEEDDEDEDADISL) shows a compositional bias: acidic residues. Residues 129–152 (EEEEEEEGEEEEEEEEDDEDEDAD) are acidic tract A2. Residues 165–180 (KRLVPQKQASVAKKKK) carry the Bipartite nuclear localization signal motif. Positions 181 to 197 (LEKEEEEIRASVRDKSP) are enriched in basic and acidic residues. A compositionally biased stretch (basic residues) spans 198–214 (VKKAKATARAKKPGFKK).

This sequence belongs to the nucleoplasmin family. In terms of assembly, homopentamer, when bound to H2A-H2B dimers only. Homodecamer of two stacked pentamers, when bound to H2A-H2B dimers and H3-H4 tetramers simultaneously.

The protein localises to the nucleus. Core histones chaperone involved in chromatin reprogramming, specially during fertilization and early embryonic development. Probably involved in sperm DNA decondensation during fertilization. The polypeptide is Nucleoplasmin-2 (NPM2) (Homo sapiens (Human)).